A 382-amino-acid chain; its full sequence is Proton extrusion protein PxcA (382 aa).

Transmembrane regions (helical) follow at residues 156 to 176, 257 to 277, 305 to 325, and 340 to 360; these read TLIS…VQQI, AIKN…VCII, IILF…QVLL, and FILL…KYWI.

The protein belongs to the CemA family.

The protein resides in the cell inner membrane. Functionally, required for H(+) efflux immediately after light irradiation to form a rapid H(+) concentration gradient across the thylakoid membranes. Together with PxcL, contributes to transient H(+) uptake following dark to light transition. This chain is Proton extrusion protein PxcA, found in Prochlorococcus marinus (strain MIT 9313).